A 321-amino-acid polypeptide reads, in one-letter code: Glucokinase (321 aa).

Glycine 8–threonine 13 contacts ATP.

It belongs to the bacterial glucokinase family.

The protein localises to the cytoplasm. The enzyme catalyses D-glucose + ATP = D-glucose 6-phosphate + ADP + H(+). This is Glucokinase from Cronobacter sakazakii (strain ATCC BAA-894) (Enterobacter sakazakii).